The sequence spans 111 residues: uncharacterized protein (111 aa).

The next 3 helical transmembrane spans lie at 22–42 (ASLI…ANIT), 48–68 (LTPA…VSVL), and 75–95 (VLVT…PKIL).

The protein localises to the membrane. This is an uncharacterized protein from Saccharomyces cerevisiae (strain ATCC 204508 / S288c) (Baker's yeast).